We begin with the raw amino-acid sequence, 99 residues long: MRHILIWFVRGYQRFISPLFPPTCRYYPTCSTYMVQALSKHGALKGSLMGLARILRCQPFVRGGIDPVPDHFTLKRNTAAEAAYRQAMQLDEIERHPHK.

It belongs to the UPF0161 family.

It localises to the cell membrane. In terms of biological role, could be involved in insertion of integral membrane proteins into the membrane. This Levilactobacillus brevis (strain ATCC 367 / BCRC 12310 / CIP 105137 / JCM 1170 / LMG 11437 / NCIMB 947 / NCTC 947) (Lactobacillus brevis) protein is Putative membrane protein insertion efficiency factor.